Consider the following 50-residue polypeptide: Defensin-like protein 1 (50 aa).

Cystine bridges form between C3–C50, C14–C35, C20–C44, and C24–C46.

It belongs to the DEFL family.

It is found in the secreted. Possesses antimicrobial activity sensitive to inorganic cations. Has no inhibitory effect on insect gut alpha-amylase. Induces potential changes in fungal membranes and increased K+ efflux and Ca(2+) uptake. Interacts with sphingolipids and ergosterols found in fungal plasma membranes. The chain is Defensin-like protein 1 from Dahlia merckii (Bedding dahlia).